The chain runs to 121 residues: Large ribosomal subunit protein uL18 (121 aa).

The protein belongs to the universal ribosomal protein uL18 family. Part of the 50S ribosomal subunit; part of the 5S rRNA/L5/L18/L25 subcomplex. Contacts the 5S and 23S rRNAs.

Its function is as follows. This is one of the proteins that bind and probably mediate the attachment of the 5S RNA into the large ribosomal subunit, where it forms part of the central protuberance. The chain is Large ribosomal subunit protein uL18 from Mesomycoplasma hyopneumoniae (strain J / ATCC 25934 / NCTC 10110) (Mycoplasma hyopneumoniae).